The primary structure comprises 916 residues: MKGGGFYQNQYLVPNVYFGNSSPVIAPIGGNALNNNNNNNNNNNNNGNNNNGININISNFQHQQHQIHQQHFGGLSPNMNQNHIIQHISHHQHQQAQQIQIIQNNNQPQPQQHQIQHQQQQQQQIQQQIQQQQIQQQQIQQQQIQQQQQQQIQQQQQQSKMNFIRGHHQRNSSFDEFSLSDVSVGSFKDMGWEEIYFCYHHFTQMDEGKGYLKSFQQLIRYITGLYPDISPSPNSQFLFSLGLLYPNALPQVQSPNMILSLTLKQMIETYSYTKSMVYSGSGSGGGNSGSGGGNSGSGGSSGNGTSGSGGSNNGSTIIINNTNLNNINNNNNTNNNNTNNINIPSTPPILRSLANGASSTNINIRKFSPQQACHIIDVFNSVKDNKTGGVSTLKLSLFGADASLLPLTTLPFHEFVQYIGLNIIPFENLFKPPPPPSSQLQSSPPIESQHLFLSEIDELTNNNQNNQNNNQQQQQYQQQQHHQQQQQQYQQQPQPQPQPQHQPFIYFEDTSNNNSPLDGNFNNSFGLFNNNNVVNHSPLGNNILNNIQQFNNQNNNQNNNNNNNNNNNNNNNNNNNNNNNNNNNNNNNNNHNNNNHNNNNNNNNQNNIFNHNQNQNNHLINNHSPNQYNNQGNILKNSGSVVEPPSQQQQYFSDIEISFSELKISSKLGEGTFGVVYKGLWRGSSVAIKQIKINEDVNNQVLEEFRKELTILSRLRHPNIVLLMAACTAPPNLCFITEYLPGGSLYDALHSKKIKMNMQLYKKLAIQIAQGMNYLHLSGVIHRDIKSLNLLLDEHMNVKICDFGLSKLKSKSTEMTKSIGSPIWMSPELLMGEDYTEKVDVYAFGIILWELGTGELPYSGLDSVQLALAVTTKSLRPPIPNAWPYQLSHLIQACWHQDPLKRPSFTEILNLLNEIP.

Disordered stretches follow at residues 283–311 (SGGG…SGGS), 461–518 (NNNQ…SPLD), and 550–646 (FNNQ…EPPS). 2 stretches are compositionally biased toward low complexity: residues 461–493 (NNNQ…QQQP) and 550–622 (FNNQ…LINN). The span at 623 to 646 (HSPNQYNNQGNILKNSGSVVEPPS) shows a compositional bias: polar residues. Residues 662–916 (LKISSKLGEG…EILNLLNEIP (255 aa)) enclose the Protein kinase domain. ATP-binding positions include 668-676 (LGEGTFGVV) and Lys689. Asp784 serves as the catalytic Proton acceptor.

Belongs to the protein kinase superfamily. TKL Ser/Thr protein kinase family.

It carries out the reaction L-seryl-[protein] + ATP = O-phospho-L-seryl-[protein] + ADP + H(+). The catalysed reaction is L-threonyl-[protein] + ATP = O-phospho-L-threonyl-[protein] + ADP + H(+). The sequence is that of Probable serine/threonine-protein kinase DDB_G0267514 from Dictyostelium discoideum (Social amoeba).